Here is a 372-residue protein sequence, read N- to C-terminus: Aminomethyltransferase (372 aa).

Belongs to the GcvT family. In terms of assembly, the glycine cleavage system is composed of four proteins: P, T, L and H.

The catalysed reaction is N(6)-[(R)-S(8)-aminomethyldihydrolipoyl]-L-lysyl-[protein] + (6S)-5,6,7,8-tetrahydrofolate = N(6)-[(R)-dihydrolipoyl]-L-lysyl-[protein] + (6R)-5,10-methylene-5,6,7,8-tetrahydrofolate + NH4(+). Its function is as follows. The glycine cleavage system catalyzes the degradation of glycine. The sequence is that of Aminomethyltransferase from Synechococcus elongatus (strain ATCC 33912 / PCC 7942 / FACHB-805) (Anacystis nidulans R2).